A 278-amino-acid chain; its full sequence is Phosphate import ATP-binding protein PstB (278 aa).

The 242-residue stretch at 32-273 (YETRDLNLWY…PSDKRTEDYI (242 aa)) folds into the ABC transporter domain. ATP is bound at residue 64 to 71 (GPSGCGKS).

Belongs to the ABC transporter superfamily. Phosphate importer (TC 3.A.1.7) family. The complex is composed of two ATP-binding proteins (PstB), two transmembrane proteins (PstC and PstA) and a solute-binding protein (PstS).

Its subcellular location is the cell membrane. It carries out the reaction phosphate(out) + ATP + H2O = ADP + 2 phosphate(in) + H(+). In terms of biological role, part of the ABC transporter complex PstSACB involved in phosphate import. Responsible for energy coupling to the transport system. This Halalkalibacterium halodurans (strain ATCC BAA-125 / DSM 18197 / FERM 7344 / JCM 9153 / C-125) (Bacillus halodurans) protein is Phosphate import ATP-binding protein PstB.